Reading from the N-terminus, the 377-residue chain is tRNA-splicing endonuclease subunit SEN2 (377 aa).

A coiled-coil region spans residues E119–R174. Catalysis depends on residues Y289, H297, and K328.

Belongs to the tRNA-intron endonuclease family. Heterotetramer composed of SEN2, SEN15, SEN34 and SEN54. Interacts directly with SEN54.

The protein resides in the nucleus. It localises to the endomembrane system. It is found in the mitochondrion outer membrane. The enzyme catalyses pretRNA = a 3'-half-tRNA molecule with a 5'-OH end + a 5'-half-tRNA molecule with a 2',3'-cyclic phosphate end + an intron with a 2',3'-cyclic phosphate and a 5'-hydroxyl terminus.. Constitutes one of the two catalytic subunit of the tRNA-splicing endonuclease complex, a complex responsible for identification and cleavage of the splice sites in pre-tRNA. It cleaves pre-tRNA at the 5'- and 3'-splice sites to release the intron. The products are an intron and two tRNA half-molecules bearing 2',3'-cyclic phosphate and 5'-OH termini. There are no conserved sequences at the splice sites, but the intron is invariably located at the same site in the gene, placing the splice sites an invariant distance from the constant structural features of the tRNA body. This subunit may anchor the endonuclease complex to the nuclear membrane. Probably carries the active site for 5'-splice site cleavage. The chain is tRNA-splicing endonuclease subunit SEN2 (SEN2) from Saccharomyces cerevisiae (strain ATCC 204508 / S288c) (Baker's yeast).